The sequence spans 598 residues: Elongation factor 4 (598 aa).

The region spanning 2–184 (QHIRNFSIIA…AIVARVPAPK (183 aa)) is the tr-type G domain. Residues 14–19 (DHGKST) and 131–134 (NKID) contribute to the GTP site.

The protein belongs to the TRAFAC class translation factor GTPase superfamily. Classic translation factor GTPase family. LepA subfamily.

It localises to the cell inner membrane. It catalyses the reaction GTP + H2O = GDP + phosphate + H(+). Required for accurate and efficient protein synthesis under certain stress conditions. May act as a fidelity factor of the translation reaction, by catalyzing a one-codon backward translocation of tRNAs on improperly translocated ribosomes. Back-translocation proceeds from a post-translocation (POST) complex to a pre-translocation (PRE) complex, thus giving elongation factor G a second chance to translocate the tRNAs correctly. Binds to ribosomes in a GTP-dependent manner. The sequence is that of Elongation factor 4 from Azoarcus sp. (strain BH72).